We begin with the raw amino-acid sequence, 347 residues long: Phosphoribosylformylglycinamidine cyclo-ligase (347 aa).

This sequence belongs to the AIR synthase family.

It is found in the cytoplasm. The enzyme catalyses 2-formamido-N(1)-(5-O-phospho-beta-D-ribosyl)acetamidine + ATP = 5-amino-1-(5-phospho-beta-D-ribosyl)imidazole + ADP + phosphate + H(+). It functions in the pathway purine metabolism; IMP biosynthesis via de novo pathway; 5-amino-1-(5-phospho-D-ribosyl)imidazole from N(2)-formyl-N(1)-(5-phospho-D-ribosyl)glycinamide: step 2/2. In Dechloromonas aromatica (strain RCB), this protein is Phosphoribosylformylglycinamidine cyclo-ligase.